Reading from the N-terminus, the 114-residue chain is MPRSVNSVAKRARRKKIMKQAKGFFGRRKNVWTVAKNAVEKAMSYAYRDRKQNKRNFRSLWIQRINAGARLEGMSYSQFMGKVKANGIELNRKVLADLAMNHPEAFKAILNKVK.

This sequence belongs to the bacterial ribosomal protein bL20 family.

Its function is as follows. Binds directly to 23S ribosomal RNA and is necessary for the in vitro assembly process of the 50S ribosomal subunit. It is not involved in the protein synthesizing functions of that subunit. This chain is Large ribosomal subunit protein bL20, found in Flavobacterium johnsoniae (strain ATCC 17061 / DSM 2064 / JCM 8514 / BCRC 14874 / CCUG 350202 / NBRC 14942 / NCIMB 11054 / UW101) (Cytophaga johnsonae).